The primary structure comprises 485 residues: uncharacterized protein (485 aa).

Positions 1–23 are cleaved as a signal peptide; it reads MRRRVCTVVRAVVCLLSTSLLTT. Cys24 carries the N-palmitoyl cysteine lipid modification. The S-diacylglycerol cysteine moiety is linked to residue Cys24. Residues 308-327 are compositionally biased toward low complexity; it reads SAASSPAQCPSSPSSSSSSS. Residues 308–331 are disordered; sequence SAASSPAQCPSSPSSSSSSSTNAG.

Belongs to the TP013X lipoprotein family.

The protein localises to the cell membrane. This is an uncharacterized protein from Treponema pallidum (strain Nichols).